A 180-amino-acid polypeptide reads, in one-letter code: GTP cyclohydrolase 1 (180 aa).

The Zn(2+) site is built by cysteine 71, histidine 74, and cysteine 142.

This sequence belongs to the GTP cyclohydrolase I family. In terms of assembly, toroid-shaped homodecamer, composed of two pentamers of five dimers.

The catalysed reaction is GTP + H2O = 7,8-dihydroneopterin 3'-triphosphate + formate + H(+). It functions in the pathway cofactor biosynthesis; 7,8-dihydroneopterin triphosphate biosynthesis; 7,8-dihydroneopterin triphosphate from GTP: step 1/1. The polypeptide is GTP cyclohydrolase 1 (Helicobacter pylori (strain HPAG1)).